A 181-amino-acid chain; its full sequence is UPF0215 protein AF_1433 (181 aa).

Belongs to the UPF0215 family.

The sequence is that of UPF0215 protein AF_1433 from Archaeoglobus fulgidus (strain ATCC 49558 / DSM 4304 / JCM 9628 / NBRC 100126 / VC-16).